The chain runs to 830 residues: BLOC-2 complex member HPS5 homolog (830 aa).

WD repeat units lie at residues 25–64 (RNNS…FLAI), 67–106 (SQLG…STDG), and 114–153 (GGPA…GRNI). Residues 578-604 (DTETIVRLLRKLETLMEENEEPNARLK) adopt a coiled-coil conformation.

The protein belongs to the HPS5 family.

Functionally, has a role in the biogenesis of eye pigment granules. Eye pigment granules are specialized forms of late endosomes or lysosomes. Biogenesis of pigment granules in the eye requires molecular components required for protein delivery to lysosomes. This chain is BLOC-2 complex member HPS5 homolog, found in Anopheles gambiae (African malaria mosquito).